We begin with the raw amino-acid sequence, 692 residues long: Elongation factor G (692 aa).

The 276-residue stretch at 8-283 (EMTRNIGIMA…AVLDYMPAPT (276 aa)) folds into the tr-type G domain. Residues 17 to 24 (AHIDAGKT), 81 to 85 (DTPGH), and 135 to 138 (NKMD) contribute to the GTP site.

It belongs to the TRAFAC class translation factor GTPase superfamily. Classic translation factor GTPase family. EF-G/EF-2 subfamily.

The protein localises to the cytoplasm. Catalyzes the GTP-dependent ribosomal translocation step during translation elongation. During this step, the ribosome changes from the pre-translocational (PRE) to the post-translocational (POST) state as the newly formed A-site-bound peptidyl-tRNA and P-site-bound deacylated tRNA move to the P and E sites, respectively. Catalyzes the coordinated movement of the two tRNA molecules, the mRNA and conformational changes in the ribosome. The polypeptide is Elongation factor G (Citrifermentans bemidjiense (strain ATCC BAA-1014 / DSM 16622 / JCM 12645 / Bem) (Geobacter bemidjiensis)).